We begin with the raw amino-acid sequence, 327 residues long: Probable NAD(P)H-dependent D-xylose reductase xyl1 (327 aa).

Y57 acts as the Proton donor in catalysis. H119 contacts substrate. Residues 173-174 (SN), 222-231 (SSLGPQSFIE), and 278-288 (KSNNPDRLAQN) contribute to the NAD(+) site.

The protein belongs to the aldo/keto reductase family.

It catalyses the reaction xylitol + NAD(+) = D-xylose + NADH + H(+). The catalysed reaction is xylitol + NADP(+) = D-xylose + NADPH + H(+). Its pathway is carbohydrate metabolism; D-xylose degradation. Its function is as follows. Catalyzes the initial reaction in the xylose utilization pathway by reducing D-xylose into xylitol. Xylose is a major component of hemicelluloses such as xylan. Most fungi utilize D-xylose via three enzymatic reactions, xylose reductase (XR), xylitol dehydrogenase (XDH), and xylulokinase, to form xylulose 5-phosphate, which enters pentose phosphate pathway. This chain is Probable NAD(P)H-dependent D-xylose reductase xyl1 (xyl1), found in Arthroderma otae (strain ATCC MYA-4605 / CBS 113480) (Microsporum canis).